The following is a 156-amino-acid chain: Small ribosomal subunit protein uS7 (156 aa).

This sequence belongs to the universal ribosomal protein uS7 family. In terms of assembly, part of the 30S ribosomal subunit. Contacts proteins S9 and S11.

One of the primary rRNA binding proteins, it binds directly to 16S rRNA where it nucleates assembly of the head domain of the 30S subunit. Is located at the subunit interface close to the decoding center, probably blocks exit of the E-site tRNA. This chain is Small ribosomal subunit protein uS7, found in Thermosynechococcus vestitus (strain NIES-2133 / IAM M-273 / BP-1).